Here is a 344-residue protein sequence, read N- to C-terminus: Phenylalanine--tRNA ligase alpha subunit (344 aa).

Glutamate 256 contributes to the Mg(2+) binding site.

The protein belongs to the class-II aminoacyl-tRNA synthetase family. Phe-tRNA synthetase alpha subunit type 1 subfamily. Tetramer of two alpha and two beta subunits. It depends on Mg(2+) as a cofactor.

The protein resides in the cytoplasm. The enzyme catalyses tRNA(Phe) + L-phenylalanine + ATP = L-phenylalanyl-tRNA(Phe) + AMP + diphosphate + H(+). This chain is Phenylalanine--tRNA ligase alpha subunit, found in Bacillus licheniformis (strain ATCC 14580 / DSM 13 / JCM 2505 / CCUG 7422 / NBRC 12200 / NCIMB 9375 / NCTC 10341 / NRRL NRS-1264 / Gibson 46).